A 269-amino-acid chain; its full sequence is Chymotrypsin-like elastase family member 2A (269 aa).

The first 16 residues, 1 to 16 (MIRTLLLSTLVAGALS), serve as a signal peptide directing secretion. Residues 17 to 28 (CGDPTYPPYVTR) constitute a propeptide, activation peptide. Positions 29–267 (VVGGEEARPN…YIDWINSVIA (239 aa)) constitute a Peptidase S1 domain. A disulfide bridge links cysteine 58 with cysteine 74. Catalysis depends on charge relay system residues histidine 73 and aspartate 121. 3 disulfide bridges follow: cysteine 155–cysteine 222, cysteine 186–cysteine 202, and cysteine 212–cysteine 243. Catalysis depends on serine 216, which acts as the Charge relay system.

It belongs to the peptidase S1 family. Elastase subfamily. As to quaternary structure, interacts with CPA1. Interacts with SERPINA1. As to expression, expressed in pancreas. Not detected in keratinocytes. Detected in exocrine secretions of the pancreas (at protein level). Also expressed in a small fraction of cells in pancreatic islets, adrenal cortex, intestinal glands and colonic lymphoid follicles (at protein level). Detected in plasma.

The protein localises to the secreted. The enzyme catalyses Preferential cleavage: Leu-|-Xaa, Met-|-Xaa and Phe-|-Xaa. Hydrolyzes elastin.. Elastase that enhances insulin signaling and might have a physiologic role in cellular glucose metabolism. Circulates in plasma and reduces platelet hyperactivation, triggers both insulin secretion and degradation, and increases insulin sensitivity. This chain is Chymotrypsin-like elastase family member 2A, found in Homo sapiens (Human).